Consider the following 362-residue polypeptide: S-adenosylmethionine decarboxylase proenzyme 2 (362 aa).

Active-site residues include Glu-9 and Glu-12. Residue Glu-68 coordinates substrate. The Schiff-base intermediate with substrate; via pyruvic acid role is filled by Ser-69. Ser-69 carries the post-translational modification Pyruvic acid (Ser); by autocatalysis. Catalysis depends on Cys-83, which acts as the Proton donor; for catalytic activity. Residues Ser-232 and His-245 each act as proton acceptor; for processing activity in the active site. A substrate-binding site is contributed by Glu-249.

It belongs to the eukaryotic AdoMetDC family. Pyruvate is required as a cofactor. Is synthesized initially as an inactive proenzyme. Formation of the active enzyme involves a self-maturation process in which the active site pyruvoyl group is generated from an internal serine residue via an autocatalytic post-translational modification. Two non-identical subunits are generated from the proenzyme in this reaction, and the pyruvate is formed at the N-terminus of the alpha chain, which is derived from the carboxyl end of the proenzyme. The post-translation cleavage follows an unusual pathway, termed non-hydrolytic serinolysis, in which the side chain hydroxyl group of the serine supplies its oxygen atom to form the C-terminus of the beta chain, while the remainder of the serine residue undergoes an oxidative deamination to produce ammonia and the pyruvoyl group blocking the N-terminus of the alpha chain.

The enzyme catalyses S-adenosyl-L-methionine + H(+) = S-adenosyl 3-(methylsulfanyl)propylamine + CO2. Its pathway is amine and polyamine biosynthesis; S-adenosylmethioninamine biosynthesis; S-adenosylmethioninamine from S-adenosyl-L-methionine: step 1/1. Functionally, essential for biosynthesis of the polyamines spermidine and spermine. Essential for polyamine homeostasis, and normal plant embryogenesis, growth and development. This Arabidopsis thaliana (Mouse-ear cress) protein is S-adenosylmethionine decarboxylase proenzyme 2.